A 393-amino-acid chain; its full sequence is 8-amino-7-oxononanoate synthase (393 aa).

107 to 108 (GF) contributes to the pyridoxal 5'-phosphate binding site. H132 lines the substrate pocket. Residues S180, 205-208 (DDAH), and 236-239 (TLSK) contribute to the pyridoxal 5'-phosphate site. K239 bears the N6-(pyridoxal phosphate)lysine mark. Substrate is bound at residue T353.

It belongs to the class-II pyridoxal-phosphate-dependent aminotransferase family. BioF subfamily. Homodimer. The cofactor is pyridoxal 5'-phosphate.

The enzyme catalyses 6-carboxyhexanoyl-[ACP] + L-alanine + H(+) = (8S)-8-amino-7-oxononanoate + holo-[ACP] + CO2. It participates in cofactor biosynthesis; biotin biosynthesis. Its function is as follows. Catalyzes the decarboxylative condensation of pimeloyl-[acyl-carrier protein] and L-alanine to produce 8-amino-7-oxononanoate (AON), [acyl-carrier protein], and carbon dioxide. This chain is 8-amino-7-oxononanoate synthase, found in Coprothermobacter proteolyticus (strain ATCC 35245 / DSM 5265 / OCM 4 / BT).